We begin with the raw amino-acid sequence, 75 residues long: Beta-defensin 30 (75 aa).

Positions 1–22 are cleaved as a signal peptide; that stretch reads MGSLQLTLVLFVLLSYVPPVRS. 3 disulfide bridges follow: Cys-35–Cys-62, Cys-42–Cys-56, and Cys-46–Cys-63.

It belongs to the beta-defensin family.

It localises to the secreted. In terms of biological role, has antibacterial activity. This is Beta-defensin 30 (Defb30) from Mus musculus (Mouse).